The following is a 371-amino-acid chain: SufE-like protein 1, chloroplastic/mitochondrial (371 aa).

The transit peptide at methionine 1 to serine 66 directs the protein to the chloroplast and mitochondrion. Cysteine 131 functions as the Cysteine persulfide intermediate in the catalytic mechanism. Position 131 is an S-glutathionyl cysteine (cysteine 131). The segment at valine 218 to valine 249 is disordered.

The protein belongs to the SufE family. As to quaternary structure, heterotetramer with NFS2. Interacts with NFS2 and NIFS1. Interacts in vitro with GRXS14, GRXS15, GRXS16 and GRXS17, but not with GRXC5. Interacts in vivo only with GRXS14 and GRXS16. Glutathionylated. Glutathionylation strongly reduces the stimulation of NFS2 activity. Expressed in roots, leaves, stems and flowers.

It localises to the plastid. The protein localises to the chloroplast stroma. Its subcellular location is the mitochondrion. It participates in cofactor biosynthesis; iron-sulfur cluster biosynthesis. Participates in cysteine desulfurization mediated by NFS2 in chloroplast and NIFS1 in mitochondrion. Activates the cysteine desulfurase activity of NFS2. Cysteine desulfurization mobilizes sulfur from L-cysteine to yield L-alanine and supplies the inorganic sulfur for iron-sulfur (Fe-S) cluster formation. Glutaredoxins regulate SUFE1 activity by inducing its reduction and deglutathionylation. This is SufE-like protein 1, chloroplastic/mitochondrial from Arabidopsis thaliana (Mouse-ear cress).